The sequence spans 199 residues: Recombination protein RecR (199 aa).

Residues 58 to 73 (CSVCSNLTDIDPCPLC) form a C4-type zinc finger. Residues 81–176 (TVICVVQDPR…KATRIAHGIP (96 aa)) enclose the Toprim domain.

Belongs to the RecR family.

May play a role in DNA repair. It seems to be involved in an RecBC-independent recombinational process of DNA repair. It may act with RecF and RecO. The polypeptide is Recombination protein RecR (Ruminiclostridium cellulolyticum (strain ATCC 35319 / DSM 5812 / JCM 6584 / H10) (Clostridium cellulolyticum)).